A 458-amino-acid polypeptide reads, in one-letter code: Exodeoxyribonuclease 7 large subunit (458 aa).

The protein belongs to the XseA family. Heterooligomer composed of large and small subunits.

The protein resides in the cytoplasm. The catalysed reaction is Exonucleolytic cleavage in either 5'- to 3'- or 3'- to 5'-direction to yield nucleoside 5'-phosphates.. Bidirectionally degrades single-stranded DNA into large acid-insoluble oligonucleotides, which are then degraded further into small acid-soluble oligonucleotides. The chain is Exodeoxyribonuclease 7 large subunit from Escherichia coli O81 (strain ED1a).